The primary structure comprises 264 residues: Vitellin-degrading protease (264 aa).

Positions 1–15 (MTNSLLICFTILGLA) are cleaved as a signal peptide. Positions 16-27 (ASSPTKPIGDIR) are cleaved as a propeptide — activation peptide. In terms of domain architecture, Peptidase S1 spans 28–253 (IVGGEDIVIT…LREWVDENIT (226 aa)). Cysteine 53 and cysteine 69 are disulfide-bonded. Catalysis depends on charge relay system residues histidine 68 and aspartate 113. Cysteine 178 and cysteine 194 are joined by a disulfide. Position 203 (aspartate 203) interacts with substrate. Cysteine 205 and cysteine 229 are disulfide-bonded. Serine 209 acts as the Charge relay system in catalysis. The N-linked (GlcNAc...) asparagine glycan is linked to asparagine 251.

The protein belongs to the peptidase S1 family. Cleavage after Arg-27 leads to beta-VTN protease and subsequent cleavage after Arg-89 leads to alpha-VTN.

Functionally, responsible for the degradation of vitellin in eggs at the head pigmentation stage. In Bombyx mori (Silk moth), this protein is Vitellin-degrading protease.